We begin with the raw amino-acid sequence, 120 residues long: Ribosome-binding factor A (120 aa).

It belongs to the RbfA family. Monomer. Binds 30S ribosomal subunits, but not 50S ribosomal subunits or 70S ribosomes.

The protein localises to the cytoplasm. In terms of biological role, one of several proteins that assist in the late maturation steps of the functional core of the 30S ribosomal subunit. Associates with free 30S ribosomal subunits (but not with 30S subunits that are part of 70S ribosomes or polysomes). Required for efficient processing of 16S rRNA. May interact with the 5'-terminal helix region of 16S rRNA. The chain is Ribosome-binding factor A from Clostridium botulinum (strain 657 / Type Ba4).